Consider the following 237-residue polypeptide: Small ribosomal subunit protein uS2m (237 aa).

Belongs to the universal ribosomal protein uS2 family.

Its subcellular location is the mitochondrion. This is Small ribosomal subunit protein uS2m (RPS2) from Marchantia polymorpha (Common liverwort).